Reading from the N-terminus, the 201-residue chain is uncharacterized protein (201 aa).

Positions 64 to 78 (DNEIKEEEESEEEEK) are enriched in acidic residues. 2 disordered regions span residues 64-114 (DNEI…FKNA) and 182-201 (ILPG…LSKQ). Over residues 96–106 (RNKHGRNRNPR) the composition is skewed to basic residues. A compositionally biased stretch (polar residues) spans 189-201 (GNTETVDQGLSKQ).

This is an uncharacterized protein from Ostreid herpesvirus 1 (isolate France) (OsHV-1).